A 361-amino-acid polypeptide reads, in one-letter code: Probable mannose-1-phosphate guanylyltransferase 2 (361 aa).

Leu-6 and Val-7 together coordinate GDP-alpha-D-mannose. Positions 9, 11, 12, 13, and 23 each coordinate diphosphate. GDP-alpha-D-mannose contacts are provided by Gly-85, Asn-109, Asp-111, Gly-146, and Asn-173.

Belongs to the transferase hexapeptide repeat family.

The catalysed reaction is alpha-D-mannose 1-phosphate + GTP + H(+) = GDP-alpha-D-mannose + diphosphate. The protein operates within nucleotide-sugar biosynthesis; GDP-alpha-D-mannose biosynthesis; GDP-alpha-D-mannose from alpha-D-mannose 1-phosphate (GTP route): step 1/1. Its function is as follows. Catalyzes a reaction of the Smirnoff-Wheeler pathway, the major route to ascorbate biosynthesis in plants. This Oryza sativa subsp. japonica (Rice) protein is Probable mannose-1-phosphate guanylyltransferase 2.